The following is a 76-amino-acid chain: Small ribosomal subunit protein eS17 (76 aa).

The protein belongs to the eukaryotic ribosomal protein eS17 family.

This is Small ribosomal subunit protein eS17 from Picrophilus torridus (strain ATCC 700027 / DSM 9790 / JCM 10055 / NBRC 100828 / KAW 2/3).